The primary structure comprises 116 residues: Protein Rev (116 aa).

Phosphoserine; by host CK2 is present on residues serine 5 and serine 8. Residues 18 to 26 (LIKFLYQSN) are homomultimerization. The disordered stretch occupies residues 25–49 (SNPPPSLEGTRQARRNRRRRWRERQ). A Nuclear localization signal and RNA-binding (RRE) motif is present at residues 34–50 (TRQARRNRRRRWRERQR). Residues 36–47 (QARRNRRRRWRE) are compositionally biased toward basic residues. The Nuclear export signal and binding to XPO1 motif lies at 73 to 84 (LPLPPLEKLTLD). Serine 92 and serine 99 each carry phosphoserine; by host. The disordered stretch occupies residues 92–116 (SGTQGVGSPQILVESPAILEPGTKE).

This sequence belongs to the HIV-1 REV protein family. In terms of assembly, homomultimer; when bound to the RRE. Multimeric assembly is essential for activity and may involve XPO1. Binds to human KPNB1, XPO1, TNPO1, RANBP5 and IPO7. Interacts with the viral Integrase. Interacts with human KHDRBS1. Interacts with human NAP1; this interaction decreases Rev multimerization and stimulates its activity. Interacts with human DEAD-box helicases DDX3 and DDX24; these interactions may serve for viral RNA export to the cytoplasm and packaging, respectively. Interacts with human PSIP1; this interaction may inhibit HIV-1 DNA integration by promoting dissociation of the Integrase-LEDGF/p75 complex. In terms of processing, asymmetrically arginine dimethylated at one site by host PRMT6. Methylation impairs the RNA-binding activity and export of viral RNA from the nucleus to the cytoplasm. Post-translationally, phosphorylated by protein kinase CK2. Presence of, and maybe binding to the N-terminus of the regulatory beta subunit of CK2 is necessary for CK2-mediated Rev's phosphorylation.

It localises to the host nucleus. It is found in the host nucleolus. Its subcellular location is the host cytoplasm. In terms of biological role, escorts unspliced or incompletely spliced viral pre-mRNAs (late transcripts) out of the nucleus of infected cells. These pre-mRNAs carry a recognition sequence called Rev responsive element (RRE) located in the env gene, that is not present in fully spliced viral mRNAs (early transcripts). This function is essential since most viral proteins are translated from unspliced or partially spliced pre-mRNAs which cannot exit the nucleus by the pathway used by fully processed cellular mRNAs. Rev itself is translated from a fully spliced mRNA that readily exits the nucleus. Rev's nuclear localization signal (NLS) binds directly to KPNB1/Importin beta-1 without previous binding to KPNA1/Importin alpha-1. KPNB1 binds to the GDP bound form of RAN (Ran-GDP) and targets Rev to the nucleus. In the nucleus, the conversion from Ran-GDP to Ran-GTP dissociates Rev from KPNB1 and allows Rev's binding to the RRE in viral pre-mRNAs. Rev multimerization on the RRE via cooperative assembly exposes its nuclear export signal (NES) to the surface. Rev can then form a complex with XPO1/CRM1 and Ran-GTP, leading to nuclear export of the complex. Conversion from Ran-GTP to Ran-GDP mediates dissociation of the Rev/RRE/XPO1/RAN complex, so that Rev can return to the nucleus for a subsequent round of export. Beside KPNB1, also seems to interact with TNPO1/Transportin-1, RANBP5/IPO5 and IPO7/RANBP7 for nuclear import. The nucleoporin-like HRB/RIP is an essential cofactor that probably indirectly interacts with Rev to release HIV RNAs from the perinuclear region to the cytoplasm. The chain is Protein Rev from Human immunodeficiency virus type 1 group M subtype B (strain 89.6) (HIV-1).